Reading from the N-terminus, the 252-residue chain is Isoprenyl transferase (252 aa).

The active site involves aspartate 32. A Mg(2+)-binding site is contributed by aspartate 32. Residues glycine 33–arginine 36, tryptophan 37, arginine 45, histidine 49, and serine 77–glutamate 79 each bind substrate. Asparagine 80 functions as the Proton acceptor in the catalytic mechanism. Substrate-binding positions include tryptophan 81, arginine 83, arginine 200, and arginine 206 to serine 208. Glutamate 219 is a binding site for Mg(2+).

This sequence belongs to the UPP synthase family. As to quaternary structure, homodimer. Mg(2+) serves as cofactor.

In terms of biological role, catalyzes the condensation of isopentenyl diphosphate (IPP) with allylic pyrophosphates generating different type of terpenoids. The protein is Isoprenyl transferase of Listeria monocytogenes serotype 4b (strain F2365).